The chain runs to 1202 residues: Calmodulin-binding transcription activator 2 (1202 aa).

Residues 30–155 (RCPLLPPERL…YLNVPALEDC (126 aa)) constitute a DNA-binding region (CG-1). The short motif at 79–86 (RKKVKYRK) is the Nuclear localization signal element. Disordered stretches follow at residues 263–322 (SIPH…SRGG), 361–409 (GTEP…AHTP), and 421–491 (PQAA…LFGG). Over residues 270–283 (PEPPPLIAPLPPEL) the composition is skewed to pro residues. 2 stretches are compositionally biased toward low complexity: residues 289-299 (SPSSSSSSSSS) and 313-322 (TSRGGSSRGG). 2 stretches are compositionally biased toward pro residues: residues 365–374 (SAPPAPPSPA) and 460–476 (PPIPSPPPSPPPSPAPL). An IPT/TIG domain is found at 537 to 615 (DFSPEWSYPE…LSASVLFEYR (79 aa)). 3 ANK repeats span residues 712 to 745 (MSLLHLAAAQGYARLIETLSQWRSVETGSLDLEQ), 757 to 787 (CTPLMWACALGHLEAAVLLFRWNRQALSIPD), and 791 to 821 (RLPLSVAHSRGHVRLARCLEELQRQEPSVEP). 2 disordered regions span residues 817–874 (PSVE…ASEM) and 906–929 (PLSSLPALPPASDDGAAPEDADSP). Composition is skewed to low complexity over residues 826 to 846 (SPPSSSPDTGLSSVSSPSELS) and 906 to 917 (PLSSLPALPPAS). IQ domains lie at 1049 to 1078 (YEAARVIQTAFRKYKGRRLKEQQEVAAAVI) and 1102 to 1131 (TQAAILIQSKFRSYYEQKRFQQSRRAAVLI).

It belongs to the CAMTA family. In terms of assembly, may interact with calmodulin. Detected in brain. Expressed at constant levels throughout the cell cycle in neuroblastoma cell lines.

It is found in the nucleus. Its function is as follows. Transcription activator. May act as tumor suppressor. The sequence is that of Calmodulin-binding transcription activator 2 (CAMTA2) from Homo sapiens (Human).